A 166-amino-acid chain; its full sequence is Small ribosomal subunit protein uS5 (166 aa).

The 64-residue stretch at 11 to 74 (LQEKLIAVNR…EKARRNMINV (64 aa)) folds into the S5 DRBM domain.

Belongs to the universal ribosomal protein uS5 family. Part of the 30S ribosomal subunit. Contacts proteins S4 and S8.

Functionally, with S4 and S12 plays an important role in translational accuracy. Its function is as follows. Located at the back of the 30S subunit body where it stabilizes the conformation of the head with respect to the body. The sequence is that of Small ribosomal subunit protein uS5 from Mannheimia succiniciproducens (strain KCTC 0769BP / MBEL55E).